Consider the following 471-residue polypeptide: ATP synthase subunit beta 1 (471 aa).

157–164 (GGAGVGKT) contacts ATP.

It belongs to the ATPase alpha/beta chains family. In terms of assembly, F-type ATPases have 2 components, CF(1) - the catalytic core - and CF(0) - the membrane proton channel. CF(1) has five subunits: alpha(3), beta(3), gamma(1), delta(1), epsilon(1). CF(0) has three main subunits: a(1), b(2) and c(9-12). The alpha and beta chains form an alternating ring which encloses part of the gamma chain. CF(1) is attached to CF(0) by a central stalk formed by the gamma and epsilon chains, while a peripheral stalk is formed by the delta and b chains.

Its subcellular location is the cell inner membrane. The enzyme catalyses ATP + H2O + 4 H(+)(in) = ADP + phosphate + 5 H(+)(out). Functionally, produces ATP from ADP in the presence of a proton gradient across the membrane. The catalytic sites are hosted primarily by the beta subunits. The chain is ATP synthase subunit beta 1 from Pelobacter propionicus (strain DSM 2379 / NBRC 103807 / OttBd1).